Consider the following 133-residue polypeptide: ATP synthase epsilon chain, chloroplastic (133 aa).

This sequence belongs to the ATPase epsilon chain family. F-type ATPases have 2 components, CF(1) - the catalytic core - and CF(0) - the membrane proton channel. CF(1) has five subunits: alpha(3), beta(3), gamma(1), delta(1), epsilon(1). CF(0) has three main subunits: a, b and c.

The protein resides in the plastid. It localises to the chloroplast thylakoid membrane. Produces ATP from ADP in the presence of a proton gradient across the membrane. The sequence is that of ATP synthase epsilon chain, chloroplastic from Atropa belladonna (Belladonna).